The sequence spans 474 residues: ATP synthase subunit beta, chloroplastic (474 aa).

155-162 (GGAGVGKT) lines the ATP pocket.

It belongs to the ATPase alpha/beta chains family. F-type ATPases have 2 components, CF(1) - the catalytic core - and CF(0) - the membrane proton channel. CF(1) has five subunits: alpha(3), beta(3), gamma(1), delta(1), epsilon(1). CF(0) has four main subunits: a(1), b(1), b'(1) and c(9-12).

The protein resides in the plastid. The protein localises to the chloroplast thylakoid membrane. It carries out the reaction ATP + H2O + 4 H(+)(in) = ADP + phosphate + 5 H(+)(out). Its function is as follows. Produces ATP from ADP in the presence of a proton gradient across the membrane. The catalytic sites are hosted primarily by the beta subunits. This chain is ATP synthase subunit beta, chloroplastic, found in Thalassiosira pseudonana (Marine diatom).